The sequence spans 345 residues: Anthranilate phosphoribosyltransferase (345 aa).

5-phospho-alpha-D-ribose 1-diphosphate is bound by residues Gly-86, Gly-89 to Asp-90, Thr-94, Asn-96 to Thr-99, Lys-114 to Ser-122, and Ser-126. An anthranilate-binding site is contributed by Gly-86. Ser-98 provides a ligand contact to Mg(2+). Residue Arg-172 participates in anthranilate binding. Residues Asp-231 and Glu-232 each contribute to the Mg(2+) site.

Belongs to the anthranilate phosphoribosyltransferase family. As to quaternary structure, homodimer. The cofactor is Mg(2+).

It carries out the reaction N-(5-phospho-beta-D-ribosyl)anthranilate + diphosphate = 5-phospho-alpha-D-ribose 1-diphosphate + anthranilate. It participates in amino-acid biosynthesis; L-tryptophan biosynthesis; L-tryptophan from chorismate: step 2/5. Its function is as follows. Catalyzes the transfer of the phosphoribosyl group of 5-phosphorylribose-1-pyrophosphate (PRPP) to anthranilate to yield N-(5'-phosphoribosyl)-anthranilate (PRA). In Ralstonia pickettii (strain 12J), this protein is Anthranilate phosphoribosyltransferase.